The sequence spans 334 residues: Beta-glucanase (334 aa).

Residues 1-27 (MKNRVISLLMASLLLVLSVIVAPFYKA) form the signal peptide. The 221-residue stretch at 28-248 (EAATVVNTPF…YVKYYPNGVP (221 aa)) folds into the GH16 domain. Glu-136 functions as the Nucleophile in the catalytic mechanism. Glu-140 (proton donor) is an active-site residue. One can recognise a Dockerin domain in the interval 267 to 334 (NLPLKGDVNG…RYLIRAIPSL (68 aa)).

This sequence belongs to the glycosyl hydrolase 16 family. As to quaternary structure, may form part of a multienzyme complex (cellulosome).

It carries out the reaction Hydrolysis of (1-&gt;4)-beta-D-glucosidic linkages in beta-D-glucans containing (1-&gt;3)- and (1-&gt;4)-bonds.. This Acetivibrio thermocellus (strain ATCC 27405 / DSM 1237 / JCM 9322 / NBRC 103400 / NCIMB 10682 / NRRL B-4536 / VPI 7372) (Clostridium thermocellum) protein is Beta-glucanase (licB).